Here is a 297-residue protein sequence, read N- to C-terminus: Pantothenate synthetase (297 aa).

30-37 contributes to the ATP binding site; the sequence is MGYLHAGH. His37 functions as the Proton donor in the catalytic mechanism. Gln61 provides a ligand contact to (R)-pantoate. A beta-alanine-binding site is contributed by Gln61. 147–150 contacts ATP; it reads GEKD. Gln153 lines the (R)-pantoate pocket. Residues Val176 and 184-187 contribute to the ATP site; that span reads LSSR.

It belongs to the pantothenate synthetase family. In terms of assembly, homodimer.

It is found in the cytoplasm. The catalysed reaction is (R)-pantoate + beta-alanine + ATP = (R)-pantothenate + AMP + diphosphate + H(+). Its pathway is cofactor biosynthesis; (R)-pantothenate biosynthesis; (R)-pantothenate from (R)-pantoate and beta-alanine: step 1/1. Functionally, catalyzes the condensation of pantoate with beta-alanine in an ATP-dependent reaction via a pantoyl-adenylate intermediate. The chain is Pantothenate synthetase from Rhizobium etli (strain ATCC 51251 / DSM 11541 / JCM 21823 / NBRC 15573 / CFN 42).